The following is a 143-amino-acid chain: Transcription antitermination protein NusB (143 aa).

Belongs to the NusB family.

Functionally, involved in transcription antitermination. Required for transcription of ribosomal RNA (rRNA) genes. Binds specifically to the boxA antiterminator sequence of the ribosomal RNA (rrn) operons. This chain is Transcription antitermination protein NusB, found in Clostridium botulinum (strain Kyoto / Type A2).